Consider the following 639-residue polypeptide: Transcription factor phomR' (639 aa).

Residues 14 to 41 (CWTCRLRRKKCNEGGPPCDNCEARGIHC) constitute a DNA-binding region (zn(2)-C6 fungal-type). Disordered regions lie at residues 58–136 (REEA…AGTG) and 476–499 (LPRS…TGPE). A compositionally biased stretch (low complexity) spans 68–108 (SGRGRSYSRSSSTAAAAAPKPAEGAMVTGGSSSSSRGSGSS).

It is found in the nucleus. Its function is as follows. Transcription factor; part of the gene cluster that mediates the biosynthesis of the phomopsins, a group of hexapeptide mycotoxins which infects lupins and causes lupinosis disease in livestock. May play a role in the regulation of the production of phomopsins. The chain is Transcription factor phomR' from Diaporthe leptostromiformis (Lupinosis disease fungus).